The sequence spans 223 residues: Rho-related protein racE (223 aa).

Residue 18–25 coordinates GTP; the sequence is GDGAVGKT. Positions 40-48 match the Effector region motif; sequence YVPTVFENY. GTP-binding positions include 65 to 69 and 123 to 126; these read DTAGQ and TKID. The disordered stretch occupies residues 187–223; the sequence is GMDKKSQDGSSSASGVPSGDKPTKGKAGKKKSGCIIL. Over residues 210–223 the composition is skewed to basic residues; that stretch reads KGKAGKKKSGCIIL. The residue at position 220 (C220) is a Cysteine methyl ester. C220 carries S-geranylgeranyl cysteine lipidation. The propeptide at 221-223 is removed in mature form; sequence IIL.

Belongs to the small GTPase superfamily. Rho family. In terms of assembly, interacts with rgaA.

Its subcellular location is the cell membrane. Specifically required for cytokinesis. The polypeptide is Rho-related protein racE (racE) (Dictyostelium discoideum (Social amoeba)).